The following is a 374-amino-acid chain: DNA replication and repair protein RecF (374 aa).

30-37 (GENAQGKT) lines the ATP pocket.

Belongs to the RecF family.

Its subcellular location is the cytoplasm. Functionally, the RecF protein is involved in DNA metabolism; it is required for DNA replication and normal SOS inducibility. RecF binds preferentially to single-stranded, linear DNA. It also seems to bind ATP. This Pediococcus pentosaceus (strain ATCC 25745 / CCUG 21536 / LMG 10740 / 183-1w) protein is DNA replication and repair protein RecF.